A 339-amino-acid chain; its full sequence is Retroviral-like aspartic protease 1 (339 aa).

Positions 1 to 188 (MRNPGGPGWA…SEPEEILFAN (188 aa)) are excised as a propeptide. The tract at residues 34–53 (VPAPFNSSRQGKNTAQPTEP) is disordered. A compositionally biased stretch (polar residues) spans 38–53 (FNSSRQGKNTAQPTEP). A glycan (N-linked (GlcNAc...) asparagine) is linked at Asn-39. The chain crosses the membrane as a helical span at residues 55–75 (LSSVIAPTLFCAFLYLACVTA). Residues 205–286 (VRFLVDSGAQ…AEEAIIGTDV (82 aa)) enclose the Peptidase A2 domain. Residue Asp-210 is part of the active site. N-linked (GlcNAc...) asparagine glycosylation is present at Asn-274. Positions 325–339 (LIEEEEGSSAPEGSH) are excised as a propeptide.

As to quaternary structure, homodimer. In terms of processing, undergoes autocleavage which is necessary for activation of the protein. As to expression, highly expressed in stratified epithelia in skin, tongue, esophagus, forestomach and vagina. Also expressed in trachea, urinary bladder and thymus. Undetectable in simple epithelia. Within the epidermis, expressed exclusively in the granular layer (at protein level). Levels are elevated in benign skin tumors but are down-regulated in squamous cell carcinomas.

Its subcellular location is the membrane. In terms of biological role, protease responsible for filaggrin processing, essential for the maintenance of a proper epidermis organization. The protein is Retroviral-like aspartic protease 1 of Mus musculus (Mouse).